Reading from the N-terminus, the 586-residue chain is Penicillin-binding protein activator LpoA (586 aa).

Residues M1 to G26 form the signal peptide. C27 carries N-palmitoyl cysteine lipidation. A lipid anchor (S-diacylglycerol cysteine) is attached at C27.

This sequence belongs to the LpoA family. As to quaternary structure, interacts with PBP1a.

Its subcellular location is the cell outer membrane. Functionally, regulator of peptidoglycan synthesis that is essential for the function of penicillin-binding protein 1A (PBP1a). This is Penicillin-binding protein activator LpoA from Histophilus somni (strain 2336) (Haemophilus somnus).